A 294-amino-acid polypeptide reads, in one-letter code: Acetylglutamate kinase (294 aa).

Residues 47–48 (GG), arginine 69, and asparagine 168 contribute to the substrate site.

Belongs to the acetylglutamate kinase family. ArgB subfamily.

It is found in the cytoplasm. The catalysed reaction is N-acetyl-L-glutamate + ATP = N-acetyl-L-glutamyl 5-phosphate + ADP. Its pathway is amino-acid biosynthesis; L-arginine biosynthesis; N(2)-acetyl-L-ornithine from L-glutamate: step 2/4. Its function is as follows. Catalyzes the ATP-dependent phosphorylation of N-acetyl-L-glutamate. The protein is Acetylglutamate kinase of Corynebacterium glutamicum (strain ATCC 13032 / DSM 20300 / JCM 1318 / BCRC 11384 / CCUG 27702 / LMG 3730 / NBRC 12168 / NCIMB 10025 / NRRL B-2784 / 534).